The chain runs to 594 residues: DNA polymerase II small subunit (594 aa).

It belongs to the DNA polymerase delta/II small subunit family. In terms of assembly, heterodimer of a large subunit and a small subunit.

The catalysed reaction is DNA(n) + a 2'-deoxyribonucleoside 5'-triphosphate = DNA(n+1) + diphosphate. It carries out the reaction Exonucleolytic cleavage in the 3'- to 5'-direction to yield nucleoside 5'-phosphates.. Possesses two activities: a DNA synthesis (polymerase) and an exonucleolytic activity that degrades single-stranded DNA in the 3' to 5' direction. Has a template-primer preference which is characteristic of a replicative DNA polymerase. The sequence is that of DNA polymerase II small subunit (polB) from Methanocaldococcus jannaschii (strain ATCC 43067 / DSM 2661 / JAL-1 / JCM 10045 / NBRC 100440) (Methanococcus jannaschii).